Consider the following 393-residue polypeptide: Dual-specificity RNA methyltransferase RlmN (393 aa).

Residue Glu115 is the Proton acceptor of the active site. Residues 121–365 (EEDRGTLCIS…APIRKTRGDD (245 aa)) enclose the Radical SAM core domain. Cysteines 128 and 370 form a disulfide. [4Fe-4S] cluster is bound by residues Cys135, Cys139, and Cys142. S-adenosyl-L-methionine-binding positions include 194–195 (GE), Ser226, 248–250 (SFH), and Asn327. The active-site S-methylcysteine intermediate is the Cys370.

The protein belongs to the radical SAM superfamily. RlmN family. [4Fe-4S] cluster serves as cofactor.

It is found in the cytoplasm. It carries out the reaction adenosine(2503) in 23S rRNA + 2 reduced [2Fe-2S]-[ferredoxin] + 2 S-adenosyl-L-methionine = 2-methyladenosine(2503) in 23S rRNA + 5'-deoxyadenosine + L-methionine + 2 oxidized [2Fe-2S]-[ferredoxin] + S-adenosyl-L-homocysteine. The enzyme catalyses adenosine(37) in tRNA + 2 reduced [2Fe-2S]-[ferredoxin] + 2 S-adenosyl-L-methionine = 2-methyladenosine(37) in tRNA + 5'-deoxyadenosine + L-methionine + 2 oxidized [2Fe-2S]-[ferredoxin] + S-adenosyl-L-homocysteine. Functionally, specifically methylates position 2 of adenine 2503 in 23S rRNA and position 2 of adenine 37 in tRNAs. m2A2503 modification seems to play a crucial role in the proofreading step occurring at the peptidyl transferase center and thus would serve to optimize ribosomal fidelity. The protein is Dual-specificity RNA methyltransferase RlmN of Ruegeria pomeroyi (strain ATCC 700808 / DSM 15171 / DSS-3) (Silicibacter pomeroyi).